The following is a 546-amino-acid chain: Aladin (546 aa).

N-acetylcysteine is present on C2. Position 33 is a phosphoserine (S33). 4 WD repeats span residues 149–188 (WSSC…VPSL), 191–230 (RLQR…LSTR), 243–282 (GHTP…CVPL), and 285–324 (FRGG…CEAW). Phosphoserine occurs at positions 495, 511, 522, 525, and 541. Residues 500-546 (RAQEPPAGGGGSIHEVPLFTETSPTSAPWDPLPGQSSAQPHSPHSHL) are disordered. Low complexity predominate over residues 534 to 546 (QSSAQPHSPHSHL). The short motif at 544 to 546 (SHL) is the Microbody targeting signal element.

Interacts with NDC1, the interaction is required for nuclear pore localization. Interacts with the inactive form aurora kinase AURKA. Interacts with PGRMC2. As to expression, widely expressed. Particularly abundant in cerebellum, corpus callosum, adrenal gland, pituitary gland, gastrointestinal structures and fetal lung.

It localises to the nucleus. The protein resides in the nuclear pore complex. The protein localises to the cytoplasm. Its subcellular location is the cytoskeleton. It is found in the spindle pole. It localises to the nucleus envelope. Its function is as follows. Plays a role in the normal development of the peripheral and central nervous system. Required for the correct localization of aurora kinase AURKA and the microtubule minus end-binding protein NUMA1 as well as a subset of AURKA targets which ensures proper spindle formation and timely chromosome alignment. This Mus musculus (Mouse) protein is Aladin (Aaas).